The chain runs to 1163 residues: Leptin receptor (1163 aa).

The first 21 residues, 1-21 (MICQKFCVVLLHWEFICVITA), serve as a signal peptide directing secretion. Over 22–837 (FNLSYPITPW…QDNTEKHQND (816 aa)) the chain is Extracellular. 7 N-linked (GlcNAc...) asparagine glycosylation sites follow: Asn23, Asn41, Asn56, Asn71, Asn79, Asn96, and Asn114. Intrachain disulfides connect Cys37/Cys88 and Cys87/Cys97. Intrachain disulfides connect Cys129/Cys140 and Cys184/Cys194. Asn185, Asn204, Asn274, Asn345, and Asn395 each carry an N-linked (GlcNAc...) asparagine glycan. Positions 237-331 (PPLGLRMEIT…TPHVFTTQDV (95 aa)) constitute a Fibronectin type-III 1 domain. Disulfide bonds link Cys350-Cys410 and Cys411-Cys416. Asn431 is a glycosylation site (N-linked (GlcNAc...) asparagine). 3 disulfides stabilise this stretch: Cys434–Cys445, Cys471–Cys526, and Cys486–Cys496. Residues 465 to 482 (RRSSLYCFDIPSIHPISK) are leptin-binding. 3 Fibronectin type-III domains span residues 537-632 (PPSS…TVVM), 637-730 (PMRG…LTFS), and 738-831 (IVQS…QDNT). Residues 620 to 624 (WSNWS) carry the WSXWS motif motif. Residues Asn622, Asn657, Asn668, Asn686, Asn695, Asn726, and Asn748 are each glycosylated (N-linked (GlcNAc...) asparagine). Residues 838-860 (AGLYVIVPVIISSSILLLGTLLI) form a helical membrane-spanning segment. The Cytoplasmic portion of the chain corresponds to 861–1163 (LHQRMKKLFW…MENKMCDLTV (303 aa)). The short motif at 869 to 877 (FWEDVPNPK) is the Box 1 motif element. Ser880 carries the post-translational modification Phosphoserine. Positions 891–896 (ETFEHL) are required for JAK2 activation. Residues 896-904 (LFIKHTASV) form a required for STAT3 phosphorylation region. Position 984 is a phosphotyrosine; by JAK2 (Tyr984). Phosphotyrosine is present on Tyr1077. Tyr1139 is modified (phosphotyrosine; by JAK2).

This sequence belongs to the type I cytokine receptor family. Type 2 subfamily. Present as a mixture of monomers and dimers. The phosphorylated receptor binds a number of SH2 domain-containing proteins such as JAK2, STAT3, PTPN11, and SOCS3. Interaction with SOCS3 inhibits JAK/STAT signaling and MAPK cascade. On ligand binding, phosphorylated on two conserved C-terminal tyrosine residues (isoform B only) by JAK2. Tyr-984 is required for complete binding and activation of PTPN11, ERK/FOS activation and, for interaction with SOCS3. Phosphorylation on Tyr-1139 is required for STAT3 binding/activation. In terms of processing, on ligand binding, phosphorylated on two conserved C-terminal tyrosine residues (isoform B only) by JAK2. Tyr-984 is required for complete binding and activation of PTPN11, ERK/FOS activation,for interaction with SOCS3 and SOCS3 mediated inhibition of leptin signaling. Phosphorylation on Tyr-1139 is required for STAT3 binding/activation. Phosphorylation of Tyr-1077 has a more accessory role. As to expression, widely expressed. High expression of isoform B in liver, adipose tissue, hypothalamus and choroid plexus.

Its subcellular location is the cell membrane. The protein localises to the basolateral cell membrane. Functionally, receptor for hormone LEP/leptin. On ligand binding, mediates LEP central and peripheral effects through the activation of different signaling pathways such as JAK2/STAT3 and MAPK cascade/FOS. In the hypothalamus, LEP acts as an appetite-regulating factor that induces a decrease in food intake and an increase in energy consumption by inducing anorexinogenic factors and suppressing orexigenic neuropeptides, also regulates bone mass and secretion of hypothalamo-pituitary-adrenal hormones. In the periphery, increases basal metabolism, influences reproductive function, regulates pancreatic beta-cell function and insulin secretion, is pro-angiogenic and affects innate and adaptive immunity. Control of energy homeostasis and melanocortin production (stimulation of POMC and full repression of AgRP transcription) is mediated by STAT3 signaling, whereas distinct signals regulate NPY and the control of fertility, growth and glucose homeostasis. Involved in the regulation of counter-regulatory response to hypoglycemia by inhibiting neurons of the parabrachial nucleus. Has a specific effect on T lymphocyte responses, differentially regulating the proliferation of naive and memory T-cells. Leptin increases Th1 and suppresses Th2 cytokine production. May transport LEP across the blood-brain barrier. Binds LEP and mediates LEP endocytosis. Does not induce phosphorylation of and activate STAT3. The sequence is that of Leptin receptor (LEPR) from Macaca mulatta (Rhesus macaque).